We begin with the raw amino-acid sequence, 188 residues long: Elongation factor P (188 aa).

It belongs to the elongation factor P family.

It is found in the cytoplasm. It functions in the pathway protein biosynthesis; polypeptide chain elongation. Involved in peptide bond synthesis. Stimulates efficient translation and peptide-bond synthesis on native or reconstituted 70S ribosomes in vitro. Probably functions indirectly by altering the affinity of the ribosome for aminoacyl-tRNA, thus increasing their reactivity as acceptors for peptidyl transferase. This chain is Elongation factor P, found in Anaplasma phagocytophilum (strain HZ).